The sequence spans 443 residues: Probable D-serine dehydratase (443 aa).

K118 is subject to N6-(pyridoxal phosphate)lysine.

This sequence belongs to the serine/threonine dehydratase family. DsdA subfamily. Pyridoxal 5'-phosphate is required as a cofactor.

It catalyses the reaction D-serine = pyruvate + NH4(+). The chain is Probable D-serine dehydratase from Aeromonas salmonicida (strain A449).